The chain runs to 308 residues: Small ribosomal subunit protein uS2 (308 aa).

At Ser-2 the chain carries N-acetylserine. Laminin-binding stretches follow at residues 161–180 (IPCN…MLAR) and 205–229 (RDPE…EFQG). 5 [DE]-W-[ST] repeats span residues 230–232 (EWT), 245–247 (DWS), 279–281 (DWS), 288–290 (DWS), and 306–308 (DWS). A laminin-binding region spans residues 242–308 (EVADWSEGVQ…DWGGATADWS (67 aa)). The segment at 262–308 (AGIEAPGKPAPAEVYAEDWSAQPATEDWSAAPTAQAGDWGGATADWS) is disordered.

This sequence belongs to the universal ribosomal protein uS2 family. As to quaternary structure, monomer (37LRP) and homodimer (67LR). Component of the small ribosomal subunit. Mature ribosomes consist of a small (40S) and a large (60S) subunit. The 40S subunit contains about 33 different proteins and 1 molecule of RNA (18S). The 60S subunit contains about 49 different proteins and 3 molecules of RNA (28S, 5.8S and 5S). Interacts with rps21. Interacts with several laminins including at least lamb1. Interacts with mdk. In terms of processing, acylated. Acylation may be a prerequisite for conversion of the monomeric 37 kDa laminin receptor precursor (37LRP) to the mature dimeric 67 kDa laminin receptor (67LR), and may provide a mechanism for membrane association. Post-translationally, cleaved by stromelysin-3 (ST3) at the cell surface. Cleavage by stromelysin-3 may be a mechanism to alter cell-extracellular matrix interactions.

It is found in the cell membrane. The protein localises to the cytoplasm. The protein resides in the nucleus. Functionally, required for the assembly and/or stability of the 40S ribosomal subunit. Required for the processing of the 20S rRNA-precursor to mature 18S rRNA in a late step of the maturation of 40S ribosomal subunits. Also functions as a cell surface receptor for laminin. Plays a role in cell adhesion to the basement membrane and in the consequent activation of signaling transduction pathways. May play a role in cell fate determination and tissue morphogenesis. The sequence is that of Small ribosomal subunit protein uS2 (rpsa) from Danio rerio (Zebrafish).